Consider the following 398-residue polypeptide: Succinate--CoA ligase [ADP-forming] subunit beta (398 aa).

Residues 9 to 254 form the ATP-grasp domain; it reads KRLLHEYGAP…LSEEDPKEIE (246 aa). ATP is bound by residues Lys-46, 53 to 55, Glu-109, Ala-112, and Glu-117; that span reads GRG. Asn-209 and Asp-223 together coordinate Mg(2+). Residues Asn-274 and 331-333 each bind substrate; that span reads GIM.

The protein belongs to the succinate/malate CoA ligase beta subunit family. In terms of assembly, heterotetramer of two alpha and two beta subunits. It depends on Mg(2+) as a cofactor.

The catalysed reaction is succinate + ATP + CoA = succinyl-CoA + ADP + phosphate. It carries out the reaction GTP + succinate + CoA = succinyl-CoA + GDP + phosphate. Its pathway is carbohydrate metabolism; tricarboxylic acid cycle; succinate from succinyl-CoA (ligase route): step 1/1. In terms of biological role, succinyl-CoA synthetase functions in the citric acid cycle (TCA), coupling the hydrolysis of succinyl-CoA to the synthesis of either ATP or GTP and thus represents the only step of substrate-level phosphorylation in the TCA. The beta subunit provides nucleotide specificity of the enzyme and binds the substrate succinate, while the binding sites for coenzyme A and phosphate are found in the alpha subunit. This chain is Succinate--CoA ligase [ADP-forming] subunit beta, found in Bartonella tribocorum (strain CIP 105476 / IBS 506).